We begin with the raw amino-acid sequence, 331 residues long: Holliday junction branch migration complex subunit RuvB (331 aa).

Residues 1 to 171 (MTEPLDAALR…FGIIEHLEYY (171 aa)) form a large ATPase domain (RuvB-L) region. ATP is bound by residues Leu9, Arg10, Gly51, Lys54, Thr55, Thr56, 118 to 120 (EDF), Arg161, Tyr171, and Arg208. Mg(2+) is bound at residue Thr55. Positions 172–242 (TPEEIGTNLL…RAQDALDKLG (71 aa)) are small ATPAse domain (RuvB-S). Residues 245-331 (TAGLDERDKK…AESDLGLYTN (87 aa)) are head domain (RuvB-H). Residues Arg300 and Arg305 each coordinate DNA.

The protein belongs to the RuvB family. Homohexamer. Forms an RuvA(8)-RuvB(12)-Holliday junction (HJ) complex. HJ DNA is sandwiched between 2 RuvA tetramers; dsDNA enters through RuvA and exits via RuvB. An RuvB hexamer assembles on each DNA strand where it exits the tetramer. Each RuvB hexamer is contacted by two RuvA subunits (via domain III) on 2 adjacent RuvB subunits; this complex drives branch migration. In the full resolvosome a probable DNA-RuvA(4)-RuvB(12)-RuvC(2) complex forms which resolves the HJ.

It localises to the cytoplasm. It carries out the reaction ATP + H2O = ADP + phosphate + H(+). Functionally, the RuvA-RuvB-RuvC complex processes Holliday junction (HJ) DNA during genetic recombination and DNA repair, while the RuvA-RuvB complex plays an important role in the rescue of blocked DNA replication forks via replication fork reversal (RFR). RuvA specifically binds to HJ cruciform DNA, conferring on it an open structure. The RuvB hexamer acts as an ATP-dependent pump, pulling dsDNA into and through the RuvAB complex. RuvB forms 2 homohexamers on either side of HJ DNA bound by 1 or 2 RuvA tetramers; 4 subunits per hexamer contact DNA at a time. Coordinated motions by a converter formed by DNA-disengaged RuvB subunits stimulates ATP hydrolysis and nucleotide exchange. Immobilization of the converter enables RuvB to convert the ATP-contained energy into a lever motion, pulling 2 nucleotides of DNA out of the RuvA tetramer per ATP hydrolyzed, thus driving DNA branch migration. The RuvB motors rotate together with the DNA substrate, which together with the progressing nucleotide cycle form the mechanistic basis for DNA recombination by continuous HJ branch migration. Branch migration allows RuvC to scan DNA until it finds its consensus sequence, where it cleaves and resolves cruciform DNA. This Deinococcus geothermalis (strain DSM 11300 / CIP 105573 / AG-3a) protein is Holliday junction branch migration complex subunit RuvB.